The sequence spans 59 residues: UPF0434 protein VS_2060 (59 aa).

It belongs to the UPF0434 family.

In Vibrio atlanticus (strain LGP32) (Vibrio splendidus (strain Mel32)), this protein is UPF0434 protein VS_2060.